A 2170-amino-acid chain; its full sequence is MAFCTQLMLLLWKNYTYRRRQPIQLVVELLWPLFLFFILVAVRHSHPPLEHHECHFPNKPLPSAGTVPWLQGLVCNVNNSCFQHPTPGEKPGVLSNFKDSLISRLLADAHTVLGGHSTQDMLAALGKLIPVLRAVGSGAWPQESNQPAKQGSVTELLEKILQRASLETVLGQAQDSMRKFSDATRTVAQELLTLPSLVELRALLRRPRGSAGSLELISEALCSTKGPSSPGGLSLNWYEANQINEFMGPELAPTLPDSSLSPACSEFVGALDDHPVSRLLWRRLKPLILGKILFAPDTNFTRKLMAQVNQTFEELALLRDLHELWGVLGPQIFNFMNDSTNVAMLQKLLDVEGTGWQQQTPKGQKQLEAIRDFLDPSRGRYNWQEAHADMGRLAEILGQILECVSLDKLEAVPSEEALVSRALELLGERRLWAGIVFLSPEHPLDSSEPPSPTTTGPGHLRVKIRMDIDDVTRTNKIRDKFWDPGPSADPLMDLRYVWGGFVYLQDLLEQAAVRVLSGRDSRAGLYLQQMPHPCYVDDVFLRVLSRSLPLFLTLAWIYSVALTVKAVVREKETRLRETMRAMGLSRAVLWLGWFLSCLGPFLVSAALLVLVLKLGNILPYSHPVVVFLFLAAFAVATVAQSFLLSAFFSRANLAAACGGLAYFALYLPYVLCVAWRERLPLGGLLAVSLLSPVAFGFGCESLALLEEQGDGAQWHNLGTGPAEDVFSLAQVSAFLLLDAVIYGLALWYLEAVCPGQYGIPEPWNFPFRRSYWCGPGPPKSSVLAPAPQDPKVLVEEPPPGLVPGVSIRGLKKHFRGSPQPALRGLNLDFYEGHITAFLGHNGAGKTTTLSILSGLFPPSSGSASILGHDVQTNMAAIRPHLGICPQYNVLFDMLTVEEHVWFYGRLKGVSAAAIDSEQEHLIRDVGLIPKRDTQTRHLSGGMQRKLSVAIAFVGGSRVVIMDEPTAGVDPASRRGIWELLLKYREGRTLILSTHHLDEAELLGDRVAMVASGSLCCCGSPLFLRRHLGCGYYLTLVKSSQSLVTHDLKGDTEDPRREKKSGSEGKTADTVLTRDGPHRSSQVPAPDAVPVTPSAALILELVQRHVPGAQLVEELPHELVLALPYAGALDGSFATVFQELDQQLERLGLTGYGISDTNLEEIFLKVVEEAHAHGEGGDPRQQQHLLTATPQPHTGPEASVLENGELAKLVLDPQAPKGSAPTTAQVQGWTLTCQQLRALLHKRFLLARRSRRGLFAQIVLPALFVGLALFFTLIVPPFGQYPPLQLSPAMYGPQVSFFSEDAPADPNRMKLLEALLGEAGLQDPSVQGKGSRGSECTHSLACYFTVPEVPPDVASILASGNWTPDSPSPACQCSQPGARRLLPDCPAGAGGPPPPQAMAGFGEVVQNLTGRNVSDFLVKTYPSLVRRGLKTKKWVDEVRYGGFSLGGRDPDLPSGREVVRTVAEMRALLSPQPGNTLDRILNNLTQWALGLDARNSLKIWFNNKGWHAMVAFVNRANNGLLRAFLPSGSVRHAHSITTLNHPLNLTKEQLSEATLIASSVDVLVSICVVFAMSFVPASFTLVLIEERITRAKHLQLVSGLPQTLYWLGNFLWDMCNYLVAVCIVVLIFLAFQQKAYVAPENLPALLLLLLLYGWSITPLMYPASFFFSVPSTAYVVLTCINLFIGINSSMATFVLELLSDQNLQEVSRILKQVFLIFPHFCLGRGLIDMVRNQAMADAFERLGDKQFQSPLRWDIIGKNLLAMVAQGPLFLLITLLLQHRNRLLPQPKSRLPPPLGEEDEDVVRERERVTKGATQGDVLVLRDLTKVYRGQRSPAVDHLCLGIPPGECFGLLGVNGAGKTSTFRMVTGDTLPSSGEAVLAGHNVAQEPSAAHRSMGYCPQSDAIFDLLTGREHLELFARLRGVPEAQVAQTALSGLVRLGLPSYADRPAGTYSGGNKRKLATALALVGDPAVVFLDEPTTGMDPSARRFLWNNLLSVVREGRSVVLTSHSMEECEALCTRLAIMVNGRFRCLGSAQHLKSRFGAGHTLTLRVPPDQPEPAIAFIVTTFPDAELREVHGSRLRFQLPPGGGCTLARVFRELAAQGKAHGVEDFSVSQTTLEEVFLYFSKDQGEEEEGSGQETETREVSTPGLQHPKRVSRFLEDPSSVETVI.

A helical membrane pass occupies residues 22–42 (PIQLVVELLWPLFLFFILVAV). Over 43–547 (RHSHPPLEHH…DVFLRVLSRS (505 aa)) the chain is Extracellular. The cysteines at positions 75 and 222 are disulfide-linked. Asparagine 309 carries N-linked (GlcNAc...) asparagine glycosylation. Helical transmembrane passes span 548-568 (LPLFLTLAWIYSVALTVKAVV), 591-611 (LGWFLSCLGPFLVSAALLVLV), 624-644 (VVVFLFLAAFAVATVAQSFLL), 653-673 (LAAACGGLAYFALYLPYVLCV), 679-699 (LPLGGLLAVSLLSPVAFGFGC), and 733-753 (AFLLLDAVIYGLALWYLEAVC). The region spanning 805–1036 (VSIRGLKKHF…LGCGYYLTLV (232 aa)) is the ABC transporter 1 domain. 839-846 (GHNGAGKT) is a binding site for ATP. The chain crosses the membrane as a helical span at residues 847–867 (TTLSILSGLFPPSSGSASILG). Positions 1044–1086 (THDLKGDTEDPRREKKSGSEGKTADTVLTRDGPHRSSQVPAPD) are disordered. Residues 1045–1066 (HDLKGDTEDPRREKKSGSEGKT) are compositionally biased toward basic and acidic residues. The chain crosses the membrane as a helical span at residues 1257 to 1277 (IVLPALFVGLALFFTLIVPPF). The Extracellular portion of the chain corresponds to 1278-1562 (GQYPPLQLSP…TLIASSVDVL (285 aa)). Cysteine 1370 and cysteine 1384 form a disulfide bridge. Transmembrane regions (helical) follow at residues 1563-1583 (VSICVVFAMSFVPASFTLVLI), 1609-1629 (FLWDMCNYLVAVCIVVLIFLA), 1646-1666 (LLLLLYGWSITPLMYPASFFF), 1674-1694 (VVLTCINLFIGINSSMATFVL), 1708-1728 (ILKQVFLIFPHFCLGRGLIDM), and 1754-1774 (IIGKNLLAMVAQGPLFLLITL). The 233-residue stretch at 1818–2050 (LVLRDLTKVY…FGAGHTLTLR (233 aa)) folds into the ABC transporter 2 domain. 1852-1859 (GVNGAGKT) lines the ATP pocket. The interval 2129–2170 (QGEEEEGSGQETETREVSTPGLQHPKRVSRFLEDPSSVETVI) is disordered.

This sequence belongs to the ABC transporter superfamily. ABCA family. Post-translationally, N-glycosylated. In terms of tissue distribution, expressed in blood cells. Also detected in brain and ovary tissues (at protein level). Expressed in platelet.

It is found in the cell membrane. The protein resides in the golgi apparatus membrane. Its subcellular location is the early endosome membrane. It localises to the cell projection. The protein localises to the ruffle membrane. It is found in the phagocytic cup. The protein resides in the cytoplasm. Its function is as follows. ATP-binding cassette (ABC) transporter that plays a role in lipid homeostasis and macrophage-mediated phagocytosis. Binds APOA1 and may function in apolipoprotein-mediated phospholipid efflux from cells. May also mediate cholesterol efflux. May regulate cellular ceramide homeostasis during keratinocyte differentiation. Involved in lipid raft organization and CD1D localization on thymocytes and antigen-presenting cells, which plays an important role in natural killer T-cell development and activation. Plays a role in phagocytosis of apoptotic cells by macrophages. Macrophage phagocytosis is stimulated by APOA1 or APOA2, probably by stabilization of ABCA7. Also involved in phagocytic clearance of amyloid-beta by microglia cells and macrophages. Further limits amyloid-beta production by playing a role in the regulation of amyloid-beta A4 precursor protein (APP) endocytosis and/or processing. The polypeptide is ATP-binding cassette sub-family A member 7 (Abca7) (Rattus norvegicus (Rat)).